A 546-amino-acid chain; its full sequence is Chaperonin GroEL (546 aa).

ATP contacts are provided by residues threonine 30 to proline 33, lysine 51, aspartate 87 to threonine 91, glycine 415, and aspartate 496. Positions glutamate 527 to phenylalanine 546 are disordered. Residues alanine 534–phenylalanine 546 show a composition bias toward gly residues.

This sequence belongs to the chaperonin (HSP60) family. In terms of assembly, forms a cylinder of 14 subunits composed of two heptameric rings stacked back-to-back. Interacts with the co-chaperonin GroES.

The protein resides in the cytoplasm. The catalysed reaction is ATP + H2O + a folded polypeptide = ADP + phosphate + an unfolded polypeptide.. Functionally, together with its co-chaperonin GroES, plays an essential role in assisting protein folding. The GroEL-GroES system forms a nano-cage that allows encapsulation of the non-native substrate proteins and provides a physical environment optimized to promote and accelerate protein folding. In Rhodospirillum centenum (strain ATCC 51521 / SW), this protein is Chaperonin GroEL.